The following is a 391-amino-acid chain: MAAPEAPVKYVGICKDSAAFKLMKSMGWEEGEGLGKDKQGIKGYVRVTNKQDTSGVGLDKPNPWAFDTTQFDNILKKLKVQAAPTKTSKNDDDSDKEDESEDDAVKSEPAKLKTVAKVTRPQGRYKRREKGKLVNSYSSKDLEGILVKRTEDPSPAVCDIADSMDIEIISEDQDASIKEQKIEEPSSNWWGFKSGFVSGGLLGAKSGKKKLKASERKMFSENDQENLYNMVQDKATAGKQGLGIKDRPKKIAGVRYEGKKTSFDNSDDDDDDDDDDDEEDEEEDEDESEADDDDKDSVIESSLPAKRKHDEIIEPKIKLKNLCKQIVKKDAGKGGFMKLKQLKSLIDEQAPSVLSEFSSRKDAIAYLKLKLERSGKFVVEGKKISLVSSKK.

The G-patch domain occupies 15 to 61 (KDSAAFKLMKSMGWEEGEGLGKDKQGIKGYVRVTNKQDTSGVGLDKP). Disordered stretches follow at residues 80 to 132 (VQAA…EKGK) and 212 to 307 (KASE…PAKR). Acidic residues-rich tracts occupy residues 92 to 102 (DDSDKEDESED) and 265 to 295 (NSDD…DDDK). Positions 305–312 (AKRKHDEI) match the Nuclear localization signal motif.

Strongly expressed in tissues with high cell proliferation activity that have a high demand for ribosome production such as shoot tips, leaves primordia, root tips and floral buds.

It is found in the nucleus. The protein resides in the nucleolus. Involved in ribosome biogenesis, required for normal progression of rRNA processing. Seems to promote cell proliferation in leaves. This chain is G-patch domain-containing protein 1, found in Arabidopsis thaliana (Mouse-ear cress).